Here is a 1135-residue protein sequence, read N- to C-terminus: Integrin alpha-7 (1135 aa).

The first 33 residues, 1–33 (MARIPRCDFLGLPGICYLLSFLLAGLLLPRASA), serve as a signal peptide directing secretion. Topologically, residues 34–1036 (FNLDVMGAIR…VAVVAEGVPW (1003 aa)) are extracellular. FG-GAP repeat units lie at residues 38 to 103 (VMGA…ETDC), 110 to 165 (RGAN…RCFV), 185 to 238 (EGRP…DPDQ), 248 to 305 (DRLT…ASRL), 306 to 367 (IPEV…HWAD), 368 to 423 (ISPL…GVVT), and 427 to 486 (QVLE…IDPR). An N-linked (GlcNAc...) asparagine glycan is attached at asparagine 86. 3 disulfides stabilise this stretch: cysteine 94/cysteine 103, cysteine 140/cysteine 163, and cysteine 184/cysteine 197. Residues aspartate 328, asparagine 330, aspartate 332, aspartate 336, aspartate 390, asparagine 392, aspartate 394, aspartate 398, aspartate 448, aspartate 450, asparagine 452, tyrosine 454, and aspartate 456 each contribute to the Ca(2+) site. Cystine bridges form between cysteine 495/cysteine 502, cysteine 508/cysteine 571, cysteine 637/cysteine 643, cysteine 736/cysteine 747, cysteine 894/cysteine 948, and cysteine 955/cysteine 960. N-linked (GlcNAc...) asparagine glycosylation is present at asparagine 741. The segment covering 905–916 (VDSRDRRRRELG) has biased composition (basic and acidic residues). Positions 905 to 933 (VDSRDRRRRELGQPEPQEPPEKVEPSTSW) are disordered. Asparagine 943 carries an N-linked (GlcNAc...) asparagine glycan. N-linked (GlcNAc...) asparagine glycans are attached at residues asparagine 979 and asparagine 999. A helical membrane pass occupies residues 1037 to 1057 (WVILLAVLAGLLVLALLVLLL). The Cytoplasmic portion of the chain corresponds to 1058–1135 (WKLGFFKRAK…PDGHPVSVTA (78 aa)). The GFFKR motif motif lies at 1061–1065 (GFFKR). 3 tandem repeats follow at residues 1111–1114 (DAHP), 1119–1122 (DWHP), and 1127–1130 (DGHP). The segment at 1111 to 1130 (DAHPILAADWHPELGPDGHP) is 3 X 4 AA repeats of D-X-H-P.

It belongs to the integrin alpha chain family. As to quaternary structure, interacts (via C-terminus intracellular tail region) with CIB1; the interaction is stabilized/increased in a calcium- and magnesium-dependent manner. Heterodimer of an alpha and a beta subunit. The alpha subunit is composed of a heavy and a light chain linked by a disulfide bond. Alpha-7 associates with beta-1. Interacts with COMP. In terms of processing, ADP-ribosylated on at least two sites of the extracellular domain in skeletal myotubes. A 70 kDa form is created by proteolytic cleavage. Cleavage is elevated during myogenic differentiation and the cleaved form enhances cell adhesion and spreading on laminin. Expressed in skeletal and cardiac muscle. Expressed in replicating myoblasts. In differentiated muscle fibers localizes between fibers and the surrounding matrix. Isoform Alpha-7X1A and isoform Alpha-7X1B are expressed at myotendinous and neuromuscular junctions; isoform Alpha-7X1C is expressed at neuromuscular junctions and at extrasynaptic sites.

It localises to the membrane. Integrin alpha-7/beta-1 is the primary laminin receptor on skeletal myoblasts and adult myofibers. During myogenic differentiation, it may induce changes in the shape and mobility of myoblasts, and facilitate their localization at laminin-rich sites of secondary fiber formation. Involved in the maintenance of the myofibers cytoarchitecture as well as for their anchorage, viability and functional integrity. Required to promote contractile phenotype acquisition in differentiated airway smooth muscle (ASM) cells. Acts as a Schwann cell receptor for laminin-2. Acts as a receptor of COMP and mediates its effect on vascular smooth muscle cells (VSMCs) maturation. The polypeptide is Integrin alpha-7 (Itga7) (Rattus norvegicus (Rat)).